A 321-amino-acid chain; its full sequence is GTP 3',8-cyclase (321 aa).

A Radical SAM core domain is found at 5–233 (SFNRVIDYIR…QGSSKIYTLE (229 aa)). Arg-14 contributes to the GTP binding site. [4Fe-4S] cluster is bound by residues Cys-21 and Cys-25. Tyr-27 is a binding site for S-adenosyl-L-methionine. Residue Cys-28 participates in [4Fe-4S] cluster binding. Arg-64 contacts GTP. Gly-68 serves as a coordination point for S-adenosyl-L-methionine. Ser-95 contacts GTP. Residue Ser-119 coordinates S-adenosyl-L-methionine. Lys-155 is a GTP binding site. S-adenosyl-L-methionine is bound at residue Met-189. Residues Cys-249 and Cys-252 each contribute to the [4Fe-4S] cluster site. Residue 254-256 (RIR) coordinates GTP. Cys-266 contributes to the [4Fe-4S] cluster binding site.

It belongs to the radical SAM superfamily. MoaA family. Monomer and homodimer. The cofactor is [4Fe-4S] cluster.

The enzyme catalyses GTP + AH2 + S-adenosyl-L-methionine = (8S)-3',8-cyclo-7,8-dihydroguanosine 5'-triphosphate + 5'-deoxyadenosine + L-methionine + A + H(+). Its pathway is cofactor biosynthesis; molybdopterin biosynthesis. In terms of biological role, catalyzes the cyclization of GTP to (8S)-3',8-cyclo-7,8-dihydroguanosine 5'-triphosphate. The polypeptide is GTP 3',8-cyclase (Helicobacter pylori (strain HPAG1)).